Consider the following 331-residue polypeptide: 7,8-didemethyl-8-hydroxy-5-deazariboflavin synthase (331 aa).

The Radical SAM core domain maps to 6–244 (ITFSKNAFLP…ADVAVQIPPN (239 aa)). [4Fe-4S] cluster is bound by residues Cys20, Cys24, and Cys27.

Belongs to the radical SAM superfamily. CofG family. Consists of two subunits, CofG and CofH. It depends on [4Fe-4S] cluster as a cofactor.

The enzyme catalyses 5-amino-5-(4-hydroxybenzyl)-6-(D-ribitylimino)-5,6-dihydrouracil + S-adenosyl-L-methionine = 7,8-didemethyl-8-hydroxy-5-deazariboflavin + 5'-deoxyadenosine + L-methionine + NH4(+) + H(+). Its pathway is cofactor biosynthesis; coenzyme F0 biosynthesis. Catalyzes the radical-mediated synthesis of 7,8-didemethyl-8-hydroxy-5-deazariboflavin from 5-amino-5-(4-hydroxybenzyl)-6-(D-ribitylimino)-5,6-dihydrouracil. The chain is 7,8-didemethyl-8-hydroxy-5-deazariboflavin synthase from Methanoculleus marisnigri (strain ATCC 35101 / DSM 1498 / JR1).